Here is a 549-residue protein sequence, read N- to C-terminus: Cytochrome bc1 complex cytochrome b subunit (549 aa).

A helical membrane pass occupies residues 45–65 (FLLGEIALYSFVVLLITGVYL). Positions 114 and 128 each coordinate heme. The next 3 membrane-spanning stretches (helical) occupy residues 118–138 (ALMF…TGAF), 146–166 (WVIG…GYSL), and 189–209 (VIGT…TILI). Positions 216 and 231 each coordinate heme. 5 consecutive transmembrane segments (helical) span residues 217 to 237 (ILLL…LVWF), 266 to 286 (SGAF…LLQI), 335 to 355 (PVWV…YPFL), 381 to 401 (IGAM…NDII), and 418 to 438 (IGMV…CIGL).

Belongs to the cytochrome b family. As to quaternary structure, the cytochrome bc1 complex is composed of a cytochrome b (QcrB), the Rieske iron-sulfur protein (QcrA) and a diheme cytochrome c (QcrC) subunit. The cofactor is heme.

It is found in the cell membrane. The catalysed reaction is a quinol + 2 Fe(III)-[cytochrome c](out) = a quinone + 2 Fe(II)-[cytochrome c](out) + 2 H(+)(out). Functionally, cytochrome b subunit of the cytochrome bc1 complex, an essential component of the respiratory electron transport chain required for ATP synthesis. The bc1 complex catalyzes the oxidation of ubiquinol and the reduction of cytochrome c in the respiratory chain. The bc1 complex operates through a Q-cycle mechanism that couples electron transfer to generation of the proton gradient that drives ATP synthesis. The cytochrome b subunit contains two ubiquinol reactive sites: the oxidation (QP) site and the reduction (QN) site. The sequence is that of Cytochrome bc1 complex cytochrome b subunit (qcrB) from Mycobacterium bovis (strain ATCC BAA-935 / AF2122/97).